A 142-amino-acid chain; its full sequence is Large ribosomal subunit protein uL13 (142 aa).

Belongs to the universal ribosomal protein uL13 family. In terms of assembly, part of the 50S ribosomal subunit.

Functionally, this protein is one of the early assembly proteins of the 50S ribosomal subunit, although it is not seen to bind rRNA by itself. It is important during the early stages of 50S assembly. The chain is Large ribosomal subunit protein uL13 from Klebsiella pneumoniae (strain 342).